The sequence spans 167 residues: Novel acetylcholine receptor chaperone (167 aa).

The Cytoplasmic segment spans residues Met1–Arg5. A helical transmembrane segment spans residues Thr6–Ile26. At Lys27 to Ser61 the chain is on the lumenal side. The segment at Ala43–Leu54 is interaction with NGFR. Residues Ile62–Val82 traverse the membrane as a helical segment. Residues Pro83–Asp88 are Cytoplasmic-facing. Residues Val89–Gly109 form a helical membrane-spanning segment. Residues Asp110–Arg114 lie on the Lumenal side of the membrane. The chain crosses the membrane as a helical span at residues Tyr115 to Ala132. The Cytoplasmic segment spans residues Arg133–Ser167. A disordered region spans residues Glu136 to Ser167.

Belongs to the DoxX family. As to quaternary structure, may interact with NGFR. Interacts with RPN1, RPN2 and CANX.

It localises to the peroxisome membrane. Its subcellular location is the cytoplasmic vesicle. The protein resides in the endoplasmic reticulum membrane. Molecular chaperone which mediates the proper assembly and functional expression of the nicotinic acetylcholine receptors (nAChRs) throughout the brain. Essential for the proper folding, assembly, function and surface trafficking of alpha-7 (CHRNA7), alpha-4-beta-2, alpha-3-beta-2 and alpha-3-beta-4 receptors. Stably associates with ribophorin-1 (RPN1) and ribophorin-2 (RPN2) (components of the oligosaccharyl transferase (OST) complex) and with calnexin (CANX), both of which are critical for NACHO-mediated effects on CHRNA7 assembly and function. Facilitates the proper folding and assembly of alpha-6-beta-2 and alpha-6-beta-2-beta-3 receptors and acts at early stages of the nAChRs subunit assembly. Promotes the expression of the alpha-4(2):beta-2(3) stoichiometric form over the alpha-4(3):beta-2(2) form. The polypeptide is Novel acetylcholine receptor chaperone (TMEM35A) (Macaca fascicularis (Crab-eating macaque)).